We begin with the raw amino-acid sequence, 541 residues long: CTP synthase (541 aa).

Residues 1–268 (MAKFIFITGG…AEIVCRRLGL (268 aa)) form an amidoligase domain region. Serine 13 lines the CTP pocket. Serine 13 provides a ligand contact to UTP. ATP-binding positions include 14–19 (GLGKGI) and aspartate 71. Residues aspartate 71 and glutamate 141 each contribute to the Mg(2+) site. CTP-binding positions include 148–150 (DIE), 189–194 (KTKPTQ), and lysine 225. UTP is bound by residues 189–194 (KTKPTQ) and lysine 225. One can recognise a Glutamine amidotransferase type-1 domain in the interval 293–539 (EIALVGKYVA…IKAALEYRAG (247 aa)). Residue glycine 359 coordinates L-glutamine. The active-site Nucleophile; for glutamine hydrolysis is cysteine 386. L-glutamine is bound by residues 387–390 (MGMQ), glutamate 410, and arginine 467. Catalysis depends on residues histidine 512 and glutamate 514.

The protein belongs to the CTP synthase family. In terms of assembly, homotetramer.

The enzyme catalyses UTP + L-glutamine + ATP + H2O = CTP + L-glutamate + ADP + phosphate + 2 H(+). It catalyses the reaction L-glutamine + H2O = L-glutamate + NH4(+). The catalysed reaction is UTP + NH4(+) + ATP = CTP + ADP + phosphate + 2 H(+). The protein operates within pyrimidine metabolism; CTP biosynthesis via de novo pathway; CTP from UDP: step 2/2. Its activity is regulated as follows. Allosterically activated by GTP, when glutamine is the substrate; GTP has no effect on the reaction when ammonia is the substrate. The allosteric effector GTP functions by stabilizing the protein conformation that binds the tetrahedral intermediate(s) formed during glutamine hydrolysis. Inhibited by the product CTP, via allosteric rather than competitive inhibition. Catalyzes the ATP-dependent amination of UTP to CTP with either L-glutamine or ammonia as the source of nitrogen. Regulates intracellular CTP levels through interactions with the four ribonucleotide triphosphates. This Symbiobacterium thermophilum (strain DSM 24528 / JCM 14929 / IAM 14863 / T) protein is CTP synthase.